The chain runs to 348 residues: Uroporphyrinogen decarboxylase (348 aa).

Substrate-binding positions include 28 to 32, D78, Y154, T209, and H325; that span reads RQAGR.

The protein belongs to the uroporphyrinogen decarboxylase family. In terms of assembly, homodimer.

It localises to the cytoplasm. The enzyme catalyses uroporphyrinogen III + 4 H(+) = coproporphyrinogen III + 4 CO2. Its pathway is porphyrin-containing compound metabolism; protoporphyrin-IX biosynthesis; coproporphyrinogen-III from 5-aminolevulinate: step 4/4. In terms of biological role, catalyzes the decarboxylation of four acetate groups of uroporphyrinogen-III to yield coproporphyrinogen-III. This chain is Uroporphyrinogen decarboxylase, found in Rhodopseudomonas palustris (strain BisA53).